Here is a 215-residue protein sequence, read N- to C-terminus: Glycerol-3-phosphate acyltransferase (215 aa).

5 helical membrane-spanning segments follow: residues methionine 1–threonine 21, isoleucine 57–tryptophan 77, methionine 85–glycine 105, valine 126–leucine 146, and valine 165–leucine 185.

Belongs to the PlsY family. As to quaternary structure, probably interacts with PlsX.

It is found in the cell inner membrane. The catalysed reaction is an acyl phosphate + sn-glycerol 3-phosphate = a 1-acyl-sn-glycero-3-phosphate + phosphate. The protein operates within lipid metabolism; phospholipid metabolism. Catalyzes the transfer of an acyl group from acyl-phosphate (acyl-PO(4)) to glycerol-3-phosphate (G3P) to form lysophosphatidic acid (LPA). This enzyme utilizes acyl-phosphate as fatty acyl donor, but not acyl-CoA or acyl-ACP. In Crocosphaera subtropica (strain ATCC 51142 / BH68) (Cyanothece sp. (strain ATCC 51142)), this protein is Glycerol-3-phosphate acyltransferase.